Here is a 30-residue protein sequence, read N- to C-terminus: Chassatide C3 (30 aa).

Residues 1–30 (GIPCGESCVWIPCISSALGCSCKNKVCYRN) constitute a cross-link (cyclopeptide (Gly-Asn)). Cystine bridges form between cysteine 4–cysteine 20, cysteine 8–cysteine 22, and cysteine 13–cysteine 27.

In terms of processing, this is a cyclic peptide. Expressed in fruit, pedicel, stem and root but not in leaf (at protein level).

Functionally, probably participates in a plant defense mechanism. The polypeptide is Chassatide C3 (Chassalia chartacea (Chassalia curviflora)).